A 203-amino-acid polypeptide reads, in one-letter code: uncharacterized protein (203 aa).

The signal sequence occupies residues 1 to 20 (MDELILPILILLFLVFVAYF).

This is an uncharacterized protein from Pasteurella multocida (strain Pm70).